The primary structure comprises 251 residues: Triosephosphate isomerase, glycosomal (251 aa).

Substrate is bound by residues Asn12 and Lys14. His96 functions as the Electrophile in the catalytic mechanism. The Proton acceptor role is filled by Glu168.

Belongs to the triosephosphate isomerase family. In terms of assembly, homodimer.

The protein localises to the glycosome. It carries out the reaction D-glyceraldehyde 3-phosphate = dihydroxyacetone phosphate. It functions in the pathway carbohydrate biosynthesis; gluconeogenesis. It participates in carbohydrate degradation; glycolysis; D-glyceraldehyde 3-phosphate from glycerone phosphate: step 1/1. The sequence is that of Triosephosphate isomerase, glycosomal from Trypanosoma cruzi.